An 808-amino-acid chain; its full sequence is N-terminal kinase-like protein (808 aa).

The Protein kinase domain maps to 14–314; sequence FELIPEPPEG…PEDFCRHKVL (301 aa). 3 HEAT repeats span residues 350–388, 389–427, and 507–545; these read IIPV…VNTQ, IFPH…LNVE, and ILPV…EDPT. Disordered regions lie at residues 540–566, 587–646, and 658–808; these read VSED…GGAA, SHPT…RWDD, and SVLA…RKLD. Positions 556–566 are enriched in low complexity; the sequence is AASSPGMGGAA. The span at 587–600 shows a compositional bias: polar residues; it reads SHPTTAPTETNIPQ. Positions 601 to 617 are enriched in pro residues; the sequence is RPTPEGVPAPAPTPVPA. The span at 660-680 shows a compositional bias: polar residues; that stretch reads LAQQDDWSTGGQVSRASQVSN. The segment covering 681–690 has biased composition (basic and acidic residues); sequence SDHKSSKSPE. Serine 754 carries the phosphoserine modification. The span at 755–764 shows a compositional bias: acidic residues; sequence WGEDNWEGLE. Residues 761–797 adopt a coiled-coil conformation; the sequence is EGLETDSRQVKAELARKKREERRREMEAKRAERKVAK. Composition is skewed to basic and acidic residues over residues 765–775 and 782–795; these read TDSRQVKAELA and RRRE…ERKV. The tract at residues 793–808 is interaction with COPB1; it reads RKVAKGPMKLGARKLD.

This sequence belongs to the protein kinase superfamily. Interacts with GORAB. Interacts with COPA, COPB1 and COPB2. Homooligomer. Interacts with AP2B1. Ubiquitous.

Its subcellular location is the cytoplasm. The protein localises to the cytoskeleton. It is found in the microtubule organizing center. It localises to the centrosome. The protein resides in the endoplasmic reticulum-Golgi intermediate compartment. Its subcellular location is the golgi apparatus. The protein localises to the cis-Golgi network. It is found in the nucleus. In terms of biological role, regulates COPI-mediated retrograde protein traffic at the interface between the Golgi apparatus and the endoplasmic reticulum. Involved in the maintenance of the Golgi apparatus morphology. Acts as a transcriptional activator. It binds to three different types of GC-rich DNA binding sites (box-A, -B and -C) in the beta-polymerase promoter region. It also binds to the TERT promoter region. This Homo sapiens (Human) protein is N-terminal kinase-like protein (SCYL1).